Reading from the N-terminus, the 356-residue chain is Heat-inducible transcription repressor HrcA (356 aa).

This sequence belongs to the HrcA family.

Functionally, negative regulator of class I heat shock genes (grpE-dnaK-dnaJ and groELS operons). Prevents heat-shock induction of these operons. This chain is Heat-inducible transcription repressor HrcA, found in Bartonella tribocorum (strain CIP 105476 / IBS 506).